The chain runs to 257 residues: MLLAIDCGNTNTVFSIWDGTQFLATWRIATDHKRTADEYHVWLSTLLSLTKIEARISEAVISSTVPRVVFNLRVLCNRYYDCRPLVVGKPECRLPVAPRVDQGTTVGPDRLVNTVAGFHLHGGNLIVVDFGTATTFDVVDADGAYIGGVIAPGVNLSLEALHMAAAALPHVDVTKPQQAIGTNTVACIQSGVYWGYIGLVEGIVRQIRLERDSPMKVIATGGLAPLFDQGFNLFDRVEDDLTMQGLVLIHQYNKDLE.

6-13 (DCGNTNTV) contacts ATP. A substrate-binding site is contributed by 107–110 (GPDR). The active-site Proton acceptor is aspartate 109. Position 129 (aspartate 129) interacts with K(+). Position 132 (threonine 132) interacts with ATP. Residue threonine 184 coordinates substrate.

This sequence belongs to the type III pantothenate kinase family. Homodimer. Requires NH4(+) as cofactor. K(+) is required as a cofactor.

It is found in the cytoplasm. It carries out the reaction (R)-pantothenate + ATP = (R)-4'-phosphopantothenate + ADP + H(+). The protein operates within cofactor biosynthesis; coenzyme A biosynthesis; CoA from (R)-pantothenate: step 1/5. Its function is as follows. Catalyzes the phosphorylation of pantothenate (Pan), the first step in CoA biosynthesis. This is Type III pantothenate kinase from Cereibacter sphaeroides (strain ATCC 17029 / ATH 2.4.9) (Rhodobacter sphaeroides).